A 259-amino-acid polypeptide reads, in one-letter code: MNISQKIVSVRGTQIGGEQPCICTPIVGASMEQILSETEEVCRKRPDIIEWRADFFKDIYDPQKVLETALAIRKIAGEIPILFTIRSEKEGGNPVPLTETEKIELFTEVCKSRLVDMIDCELLYEEELASLRQVSKEYGIRMIMSYHNFSSTPPKEELVQKMLQAESYGADIAKVAVMPASPQDLLVLFQATQEARSQLSIPLITMSMGGLGVITRLAGWMFGSAVTFAVGQNSSAPGQIPIEDLKEVLHIVQKHMFHG.

3-dehydroquinate is bound by residues 50 to 52 and Arg-86; that span reads EWR. His-147 acts as the Proton donor/acceptor in catalysis. The active-site Schiff-base intermediate with substrate is Lys-174. 3-dehydroquinate is bound by residues Arg-216, Ser-235, and Gln-239.

This sequence belongs to the type-I 3-dehydroquinase family. In terms of assembly, homodimer.

It catalyses the reaction 3-dehydroquinate = 3-dehydroshikimate + H2O. The protein operates within metabolic intermediate biosynthesis; chorismate biosynthesis; chorismate from D-erythrose 4-phosphate and phosphoenolpyruvate: step 3/7. Its function is as follows. Involved in the third step of the chorismate pathway, which leads to the biosynthesis of aromatic amino acids. Catalyzes the cis-dehydration of 3-dehydroquinate (DHQ) and introduces the first double bond of the aromatic ring to yield 3-dehydroshikimate. This chain is 3-dehydroquinate dehydratase, found in Geobacillus sp. (strain WCH70).